A 395-amino-acid chain; its full sequence is Probable alcohol dehydrogenase EutG (395 aa).

Residues Asp57, 116 to 120 (GSVLD), 156 to 160 (TTAGT), Lys178, and 197 to 201 (VTEGV) contribute to the NAD(+) site. Fe cation is bound by residues Asp212, His216, His281, and His295. NAD(+) is bound by residues His295 and Asp354.

The protein belongs to the iron-containing alcohol dehydrogenase family. Fe cation is required as a cofactor.

It localises to the bacterial microcompartment. The enzyme catalyses ethanol + NAD(+) = acetaldehyde + NADH + H(+). It functions in the pathway amine and polyamine degradation; ethanolamine degradation. Probably acts on the acetaldehyde produced by the degradation of ethanolamine, producing ethanol. In terms of biological role, expression of the eut operon allows this bacteria to use ethanolamine (EA) as a carbon, nitrogen and energy source. It relies on cobalamin (vitamin B12) both as a cofactor for the ethanolamine ammonia-lyase (EAL) activity and to induce the operon. EA enhances bacterial survival in macrophages in a concentration-dependent manner, suggesting it is an important nutrient during infection. The protein is Probable alcohol dehydrogenase EutG of Salmonella typhimurium (strain LT2 / SGSC1412 / ATCC 700720).